Reading from the N-terminus, the 810-residue chain is Glycerol-3-phosphate acyltransferase (810 aa).

An HXXXXD motif motif is present at residues 305-310; that stretch reads CHRSHI.

Belongs to the GPAT/DAPAT family.

It localises to the cell inner membrane. It catalyses the reaction sn-glycerol 3-phosphate + an acyl-CoA = a 1-acyl-sn-glycero-3-phosphate + CoA. It participates in phospholipid metabolism; CDP-diacylglycerol biosynthesis; CDP-diacylglycerol from sn-glycerol 3-phosphate: step 1/3. The chain is Glycerol-3-phosphate acyltransferase from Haemophilus influenzae (strain 86-028NP).